Here is a 452-residue protein sequence, read N- to C-terminus: Phosphatidylserine synthase 2 (452 aa).

The Cytoplasmic portion of the chain corresponds to 1–35 (MAKGEWKRSGADDLPLPGRSECEVFDDGTNTFFWR). A helical membrane pass occupies residues 36–56 (AHTVTVLFILTCALVYVTLLE). Residues 57 to 69 (ETPHDTAYNTKRG) are Lumenal-facing. Residues 70–90 (IVASILVFLCFGVTQAKDGPF) form a helical membrane-spanning segment. The Cytoplasmic segment spans residues 91–99 (TRPHPAYWR). A helical membrane pass occupies residues 100–120 (FWLCVSVVYELFLIFILFQTV). Over 121–286 (HDGRQFMKYI…EWRPASNLRR (166 aa)) the chain is Lumenal. A helical membrane pass occupies residues 287 to 307 (WLAVLGIIFMFLLAELNTFYL). K308 is a topological domain (cytoplasmic). A helical transmembrane segment spans residues 309–329 (FVMWMPPEHYLVLFRLVFFVN). Over 330-349 (VGGVAMREIYDFMDDPKFHK) the chain is Lumenal. A helical transmembrane segment spans residues 350 to 370 (KLGQQAWIVAAITVTEFLIVV). Over 371 to 376 (KYDPNT) the chain is Cytoplasmic. Residues 377–397 (IMLPIPFFITQCWILGIALIL) traverse the membrane as a helical segment. At 398–452 (VWTLWRFFIRDITLRYKETRRRRQEVSSERDGSSSAPSGRSKLNGSMDSVRHRKS) the chain is on the lumenal side. The disordered stretch occupies residues 419 to 452 (RRQEVSSERDGSSSAPSGRSKLNGSMDSVRHRKS). Positions 430–444 (SSSAPSGRSKLNGSM) are enriched in polar residues.

It belongs to the phosphatidyl serine synthase family.

The protein resides in the endoplasmic reticulum membrane. The enzyme catalyses a 1,2-diacyl-sn-glycero-3-phosphoethanolamine + L-serine = a 1,2-diacyl-sn-glycero-3-phospho-L-serine + ethanolamine. It carries out the reaction 1-hexadecanoyl-2-(9Z-octadecenoyl)-sn-glycero-3-phosphoethanolamine + L-serine = 1-hexadecanoyl-2-(9Z-octadecenoyl)-sn-glycero-3-phospho-L-serine + ethanolamine. The catalysed reaction is 1-hexadecanoyl-2-(4Z,7Z,10Z,13Z,16Z,19Z-docosahexaenoyl)-sn-glycero-3-phosphoethanolamine + L-serine = 1-hexadecanoyl-2-(4Z,7Z,10Z,13Z,16Z,19Z-docosahexaenoyl)-sn-glycero-3-phosphoserine + ethanolamine. It catalyses the reaction 1-octadecanoyl-2-(5Z,8Z,11Z,14Z)-eicosatetraenoyl-sn-glycero-3-phosphoethanolamine + L-serine = 1-octadecanoyl-2-(5Z,8Z,11Z,14Z)-eicosatetraenoyl-sn-glycero-3-phosphoserine + ethanolamine. The enzyme catalyses 1-octadecanoyl-2-(4Z,7Z,10Z,13Z,16Z,19Z-docosahexaenoyl)-sn-glycero-3-phosphoethanolamine + L-serine = 1-octadecanoyl-2-(4Z,7Z,10Z,13Z,16Z,19Z-docosahexaenoyl)-sn-glycero-3-phosphoserine + ethanolamine. It carries out the reaction 1-(1Z-octadecenyl)-2-(4Z,7Z,10Z,13Z,16Z,19Z-docosahexaenoyl)-sn-glycero-3-phosphoethanolamine + L-serine = 1-(1Z-octadecenyl)-2-(4Z,7Z,10Z,13Z,16Z,19Z-docosahexaenoyl)-sn-glycero-3-phospho-L-serine + ethanolamine. The catalysed reaction is 1-octadecanoyl-2-(9Z-octadecenoyl)-sn-glycero-3-phosphoethanolamine + L-serine = 1-octadecanoyl-2-(9Z-octadecenoyl)-sn-glycero-3-phospho-L-serine + ethanolamine. It catalyses the reaction 1-(1Z-octadecenyl)-2-(9Z-octadecenoyl)-sn-glycero-3-phosphoethanolamine + L-serine = 1-(1Z-octadecenyl)-2-(9Z-octadecenoyl)-sn-glycero-3-phospho-L-serine + ethanolamine. The enzyme catalyses 1-(1Z-octadecenyl)-2-(5Z,8Z,11Z,14Z- eicosatetraenoyl)-sn-glycero-3-phosphoethanolamine + L-serine = 1-(1Z-octadecenyl)-2-(5Z,8Z,11Z,14Z-eicosatetraenoyl)-sn-glycero-3-phospho-L-serine + ethanolamine. It participates in phospholipid metabolism; phosphatidylserine biosynthesis. Functionally, catalyzes a base-exchange reaction in which the polar head group of phosphatidylethanolamine (PE) or phosphatidylcholine (PC) is replaced by L-serine. Catalyzes the conversion of phosphatatidylethanolamine and does not act on phosphatidylcholine. Can utilize both phosphatidylethanolamine (PE) plasmalogen and diacyl PE as substrate and the latter is six times better utilized, indicating the importance of an ester linkage at the sn-1 position. Although it shows no sn-1 fatty acyl preference, exhibits significant preference towards docosahexaenoic acid (22:6n-3) compared with 18:1 or 20:4 at the sn-2 position. In Danio rerio (Zebrafish), this protein is Phosphatidylserine synthase 2 (ptdss2).